We begin with the raw amino-acid sequence, 152 residues long: Deoxyuridine 5'-triphosphate nucleotidohydrolase (152 aa).

Residues 71–73, Asn-84, 88–90, and Met-98 contribute to the substrate site; these read RSG and LID.

It belongs to the dUTPase family. Mg(2+) is required as a cofactor.

The catalysed reaction is dUTP + H2O = dUMP + diphosphate + H(+). It functions in the pathway pyrimidine metabolism; dUMP biosynthesis; dUMP from dCTP (dUTP route): step 2/2. This enzyme is involved in nucleotide metabolism: it produces dUMP, the immediate precursor of thymidine nucleotides and it decreases the intracellular concentration of dUTP so that uracil cannot be incorporated into DNA. This Klebsiella pneumoniae (strain 342) protein is Deoxyuridine 5'-triphosphate nucleotidohydrolase.